Reading from the N-terminus, the 238-residue chain is Large ribosomal subunit protein uL1 (238 aa).

It belongs to the universal ribosomal protein uL1 family. Part of the 50S ribosomal subunit.

In terms of biological role, binds directly to 23S rRNA. The L1 stalk is quite mobile in the ribosome, and is involved in E site tRNA release. Functionally, protein L1 is also a translational repressor protein, it controls the translation of the L11 operon by binding to its mRNA. The protein is Large ribosomal subunit protein uL1 of Trichodesmium erythraeum (strain IMS101).